Here is a 712-residue protein sequence, read N- to C-terminus: tRNA 5-methylaminomethyl-2-thiouridine biosynthesis bifunctional protein MnmC (712 aa).

Residues 1–268 (MPNMRHRVNS…RRALRHAQSD (268 aa)) form a tRNA (mnm(5)s(2)U34)-methyltransferase region. Residues 292–712 (IGGGVASTHL…MRKLIKGKAL (421 aa)) form an FAD-dependent cmnm(5)s(2)U34 oxidoreductase region.

In the N-terminal section; belongs to the methyltransferase superfamily. tRNA (mnm(5)s(2)U34)-methyltransferase family. The protein in the C-terminal section; belongs to the DAO family. FAD serves as cofactor.

The protein resides in the cytoplasm. It carries out the reaction 5-aminomethyl-2-thiouridine(34) in tRNA + S-adenosyl-L-methionine = 5-methylaminomethyl-2-thiouridine(34) in tRNA + S-adenosyl-L-homocysteine + H(+). Its function is as follows. Catalyzes the last two steps in the biosynthesis of 5-methylaminomethyl-2-thiouridine (mnm(5)s(2)U) at the wobble position (U34) in tRNA. Catalyzes the FAD-dependent demodification of cmnm(5)s(2)U34 to nm(5)s(2)U34, followed by the transfer of a methyl group from S-adenosyl-L-methionine to nm(5)s(2)U34, to form mnm(5)s(2)U34. The polypeptide is tRNA 5-methylaminomethyl-2-thiouridine biosynthesis bifunctional protein MnmC (Shewanella sediminis (strain HAW-EB3)).